Reading from the N-terminus, the 230-residue chain is MTTLTARPEAITFDPQQSALIVVDMQNAYATPGGYLDLAGFDVSTTRPVIANIQTAVTAARAAGMLIIWFQNGWDEQYVEAGGPGSPNFHKSNALKTMRKQPQLQGKLLAKGSWDYQLVDELVPQPGDIVLPKPRYSGFFNTPLDSILRSRGIRHLVFTGIATNVCVESTLRDGFFLEYFGVVLEDATHQAGPEFAQKAALFNIETFFGWVSDVETFCDALSPTSFAHIA.

The active-site Proton acceptor is the D24. K133 is an active-site residue. C166 functions as the Nucleophile in the catalytic mechanism.

It belongs to the isochorismatase family. RutB subfamily.

It catalyses the reaction (Z)-3-ureidoacrylate + H2O + H(+) = (Z)-3-aminoacrylate + NH4(+) + CO2. It carries out the reaction (Z)-3-ureidoacrylate + H2O = (Z)-3-aminoacrylate + carbamate + H(+). The catalysed reaction is (Z)-2-methylureidoacrylate + H2O + H(+) = (Z)-2-methylaminoacrylate + NH4(+) + CO2. In terms of biological role, hydrolyzes ureidoacrylate to form aminoacrylate and carbamate. The carbamate hydrolyzes spontaneously, thereby releasing one of the nitrogen atoms of the pyrimidine ring as ammonia and one of its carbon atoms as CO2. The sequence is that of Ureidoacrylate amidohydrolase RutB from Escherichia coli (strain B / BL21-DE3).